A 479-amino-acid chain; its full sequence is Phosphatidylinositol 4-kinase type 2-beta (479 aa).

Residues 1–10 (MESGSEEPDE) show a composition bias toward acidic residues. The segment at 1–91 (MESGSEEPDE…PRVGAGHTGH (91 aa)) is disordered. Residues 18–34 (PALHAGPPAGRAAPGGA) are compositionally biased toward low complexity. Over residues 42-62 (GLEEEEEGEEDSGPEGDGEEE) the composition is skewed to acidic residues. The 332-residue stretch at 118-449 (GVLPERISQG…VQMPRVIVER (332 aa)) folds into the PI3K/PI4K catalytic domain. Positions 124–130 (ISQGSSG) are G-loop. Ser-131 and Lys-146 together coordinate ATP. The tract at residues 151–153 (EPY) is important for substrate binding. The tract at residues 159–172 (KWTKYFHKICCPCC) is important for interaction with membranes. Residues 255 to 258 (QLFV) and 269 to 270 (RK) contribute to the ATP site. Residues 262 to 270 (KEADYWLRK) form an important for interaction with membranes region. The tract at residues 299–307 (RNTDRGNDN) is catalytic loop. An activation loop region spans residues 340-360 (AIDNGLAFPFKHPDEWRAYPF). Asp-342 serves as a coordination point for ATP. Residues 355–364 (WRAYPFHWAW) are important for interaction with membranes.

Belongs to the PI3/PI4-kinase family. Type II PI4K subfamily.

It localises to the cytoplasm. The protein resides in the cytosol. It is found in the golgi apparatus membrane. Its subcellular location is the endoplasmic reticulum membrane. The protein localises to the cell membrane. It localises to the early endosome membrane. It catalyses the reaction a 1,2-diacyl-sn-glycero-3-phospho-(1D-myo-inositol) + ATP = a 1,2-diacyl-sn-glycero-3-phospho-(1D-myo-inositol 4-phosphate) + ADP + H(+). Its function is as follows. Contributes to the overall PI4-kinase activity of the cell. This contribution may be especially significant in plasma membrane, endosomal and Golgi compartments. The phosphorylation of phosphatidylinositol (PI) to PI4P is the first committed step in the generation of phosphatidylinositol 4,5-bisphosphate (PIP2), a precursor of the second messenger inositol 1,4,5-trisphosphate (InsP3). The chain is Phosphatidylinositol 4-kinase type 2-beta (PI4K2B) from Gallus gallus (Chicken).